An 89-amino-acid polypeptide reads, in one-letter code: UPF0367 protein MAE_19160 (89 aa).

Belongs to the UPF0367 family.

This is UPF0367 protein MAE_19160 from Microcystis aeruginosa (strain NIES-843 / IAM M-2473).